The primary structure comprises 457 residues: Argininosuccinate lyase (457 aa).

Belongs to the lyase 1 family. Argininosuccinate lyase subfamily.

Its subcellular location is the cytoplasm. The catalysed reaction is 2-(N(omega)-L-arginino)succinate = fumarate + L-arginine. The protein operates within amino-acid biosynthesis; L-arginine biosynthesis; L-arginine from L-ornithine and carbamoyl phosphate: step 3/3. In Serratia proteamaculans (strain 568), this protein is Argininosuccinate lyase.